The primary structure comprises 614 residues: MTDVPAPAFDGKAFAAQLSTAPGVYRMYAADDTLLYVGKARALRNRVGSYFNGSPKNARIMSMISQIVRMDVTVTRSEAEALLLENQLIKSLSPRYNVSLRDDKTYPHVLLTREDWPRIALHRGPRAIPGRYFGPYPGVTAVRETLNLMHKLFKLRSCEDSVFRNRSRPCLQYQIGRCSAPCVELVAPAEYAESVRRAALFLEGKSDELTRELGEQMQAASEALEFEQAARLRDLISSLRSMQTRQYVDGRAADLDVLAVAMQGSQACVLLLAFRDGRNLGTRPFFPRTNGEESPEEVLAAFVSQYYIEFEPPREILLDREIPDADLLVAALSASAERKVQLKWNVRGERAGYVELASRNAQLTLATELNSRNAQHARSDALREMLGLAEPVKRVECFDISHTLGEATVASCVVFDAAGPVRAQYRRFNISGIEPGDDYAAMRQAIDRRFRRAVEEQGVLPDVLLIDGGAGQLAQAQAALADLGVEGVLLVGVAKGVERRAGHEALVMPDGRELRPGAANPALQFIQQVRDEAHRFAITGHRGRRQKARMTSKLEDIPGIGPRRRASLLKHFGGLVGLKAAGEAEIAKVEGINDALAARIYANLHGLATPDAAE.

One can recognise a GIY-YIG domain in the interval 20-98 (TAPGVYRMYA…IKSLSPRYNV (79 aa)). The 36-residue stretch at 207–242 (DELTRELGEQMQAASEALEFEQAARLRDLISSLRSM) folds into the UVR domain.

This sequence belongs to the UvrC family. Interacts with UvrB in an incision complex.

It is found in the cytoplasm. In terms of biological role, the UvrABC repair system catalyzes the recognition and processing of DNA lesions. UvrC both incises the 5' and 3' sides of the lesion. The N-terminal half is responsible for the 3' incision and the C-terminal half is responsible for the 5' incision. The polypeptide is UvrABC system protein C (Stenotrophomonas maltophilia (strain K279a)).